The primary structure comprises 176 residues: NAD(P)H-quinone oxidoreductase subunit 6, chloroplastic (176 aa).

The next 5 membrane-spanning stretches (helical) occupy residues 10-30, 32-52, 60-80, 107-127, and 152-172; these read FLLV…VLLT, PIFS…FHIP, AAQL…AVMF, IFVS…IWTT, and FFLP…GAIA.

Belongs to the complex I subunit 6 family. In terms of assembly, NDH is composed of at least 16 different subunits, 5 of which are encoded in the nucleus.

The protein localises to the plastid. It localises to the chloroplast thylakoid membrane. The catalysed reaction is a plastoquinone + NADH + (n+1) H(+)(in) = a plastoquinol + NAD(+) + n H(+)(out). It carries out the reaction a plastoquinone + NADPH + (n+1) H(+)(in) = a plastoquinol + NADP(+) + n H(+)(out). NDH shuttles electrons from NAD(P)H:plastoquinone, via FMN and iron-sulfur (Fe-S) centers, to quinones in the photosynthetic chain and possibly in a chloroplast respiratory chain. The immediate electron acceptor for the enzyme in this species is believed to be plastoquinone. Couples the redox reaction to proton translocation, and thus conserves the redox energy in a proton gradient. The chain is NAD(P)H-quinone oxidoreductase subunit 6, chloroplastic (ndhG) from Buxus microphylla (Littleleaf boxwood).